Reading from the N-terminus, the 952-residue chain is Disintegrin and metalloproteinase domain-containing protein adm-2 (952 aa).

Topologically, residues 1 to 672 are extracellular; the sequence is MTDTLDLKLS…NEAYRFRGIT (672 aa). Residues Asn-125 and Asn-301 are each glycosylated (N-linked (GlcNAc...) asparagine). The Peptidase M12B domain maps to 177–373; sequence RFVELALVAD…GIDLCLFNEP (197 aa). Cystine bridges form between Cys-287–Cys-368, Cys-330–Cys-352, and Cys-332–Cys-337. His-312 is a binding site for Zn(2+). Glu-313 is an active-site residue. Positions 316 and 322 each coordinate Zn(2+). Residues 379 to 466 form the Disintegrin domain; the sequence is DAKCGNGIVE…DCPADFFVQN (88 aa). N-linked (GlcNAc...) asparagine glycosylation occurs at Asn-406. Cystine bridges form between Cys-438-Cys-458, Cys-624-Cys-634, Cys-628-Cys-640, and Cys-642-Cys-651. The EGF-like domain maps to 620–652; sequence VTAQCLDNCNFRGVCNNVGNCHCERGFGGIACE. A helical transmembrane segment spans residues 673-693; sequence LSSTFLVFFCLFGIFIGGLCV. Residues 694–952 are Cytoplasmic-facing; it reads YYRVKRKRNL…AAIFDQKLKK (259 aa). Disordered stretches follow at residues 778–809 and 829–938; these read IPMV…ERAT and SFNT…EKVD. 2 stretches are compositionally biased toward basic and acidic residues: residues 798–809 and 849–873; these read AEKEEQNQERAT and PSDD…DRLN. The span at 905–914 shows a compositional bias: pro residues; sequence QAPPPPPPAH. Basic and acidic residues predominate over residues 925–938; the sequence is KVSEDAAATEEKVD.

Zn(2+) is required as a cofactor. Expressed in hyp7 large epidermal syncytium (punctate distribution), seam cell syncytia, anterior epidermis, neurons located in the head, tail and central body, proximal oogenic cells (levels increasing in maturing oocytes) and myoepithelial cells of the spermatheca (at protein level). Not detected in mature sperm cells.

It localises to the cell membrane. The protein localises to the endosome membrane. The protein resides in the lysosome membrane. Functionally, metalloprotease that cleaves and releases a number of molecules. Negative regulator of lrp-1 protein levels, potentially by influencing its endosomal trafficking. Involved in regulating the molting process. The chain is Disintegrin and metalloproteinase domain-containing protein adm-2 from Caenorhabditis elegans.